The primary structure comprises 235 residues: Transcriptional regulatory protein MalR (235 aa).

Positions 3–119 constitute a Response regulatory domain; that stretch reads NVLIVEDDPM…RFQTALSDYR (117 aa). Aspartate 54 carries the post-translational modification 4-aspartylphosphate. Residues 178 to 197 constitute a DNA-binding region (H-T-H motif); that stretch reads TEDLAKHTEISQVSIRKYLK.

Phosphorylated and activated by MalK.

The protein resides in the cytoplasm. Functionally, member of a two-component regulatory system MalK/MalR. Activates transcription of maeA, maeN and yflS in presence of malate by binding to their promoter region. The sequence is that of Transcriptional regulatory protein MalR (malR) from Bacillus subtilis (strain 168).